Consider the following 50-residue polypeptide: Omwaprin-a (50 aa).

The WAP domain maps to R3–I47. Intrachain disulfides connect C10–C35, C18–C39, C22–C34, and C28–C43.

The protein belongs to the venom waprin family. As to expression, expressed by the venom gland.

The protein localises to the secreted. Its function is as follows. Damages membranes of susceptible bacteria. Has antibacterial activity against the Gram-positive bacteria B.megaterium and S.warneri. After a 45-minute treatment with this protein, B.megaterium have no visible pili and are smooth. Has no antibacterial activity against the Gram-positive bacteria B.thuringiensis, S.aureus, S.clavuligerus and B.anthracis, or the Gram-negative bacteria E.coli and A.tumefaciens. Has no hemolytic activity. Does not inhibit the proteinases elastase and cathepsin G. Is not toxic to mice. This is Omwaprin-a from Oxyuranus microlepidotus (Inland taipan).